The following is a 361-amino-acid chain: 3-dehydroquinate synthase (361 aa).

Residues 72–77 (SGEKEK), 130–131 (TT), K142, and K151 each bind NAD(+). The Zn(2+) site is built by E184, H247, and H264.

Belongs to the sugar phosphate cyclases superfamily. Dehydroquinate synthase family. Requires Co(2+) as cofactor. The cofactor is Zn(2+). It depends on NAD(+) as a cofactor.

The protein localises to the cytoplasm. The enzyme catalyses 7-phospho-2-dehydro-3-deoxy-D-arabino-heptonate = 3-dehydroquinate + phosphate. Its pathway is metabolic intermediate biosynthesis; chorismate biosynthesis; chorismate from D-erythrose 4-phosphate and phosphoenolpyruvate: step 2/7. Catalyzes the conversion of 3-deoxy-D-arabino-heptulosonate 7-phosphate (DAHP) to dehydroquinate (DHQ). The chain is 3-dehydroquinate synthase from Bacillus cereus (strain ZK / E33L).